Reading from the N-terminus, the 215-residue chain is Beta-crystallin A3 (215 aa).

M1 bears the N-acetylmethionine mark. Positions 1–16 (METQAEQQELETLPTT) are enriched in low complexity. The interval 1–29 (METQAEQQELETLPTTKMAQTNPTPGSLG) is disordered. Positions 1–30 (METQAEQQELETLPTTKMAQTNPTPGSLGP) are N-terminal arm. Position 2 is an N-acetylalanine (E2). Beta/gamma crystallin 'Greek key' domains are found at residues 31–70 (WKIT…KVES) and 71–117 (GAWI…RPIC). S-glutathionyl cysteine; alternate occurs at positions 82 and 117. C82 and C117 each carry S-methylcysteine; alternate. The connecting peptide stretch occupies residues 118 to 123 (SANHKE). Beta/gamma crystallin 'Greek key' domains lie at 124 to 165 (SKMT…KIQS) and 166 to 214 (GAWV…RRIQ). Position 185 is an S-methylcysteine (C185).

It belongs to the beta/gamma-crystallin family. As to quaternary structure, homo/heterodimer, or complexes of higher-order. The structure of beta-crystallin oligomers seems to be stabilized through interactions between the N-terminal arms. Interacts with CRYBA1. Post-translationally, specific cleavages in the N-terminal arm occur during lens maturation and give rise to several truncated forms. Cleavages do not seem to have adverse effects on solubility. In terms of processing, S-methylation and glutathionylation occur in normal young lenses and do not seem to be detrimental.

Functionally, crystallins are the dominant structural components of the vertebrate eye lens. In Homo sapiens (Human), this protein is Beta-crystallin A3.